The chain runs to 520 residues: MTSANKSDKDRVVIFDTTLRDGEQCPGATMTFEEKLEVAEMLDDMGIDIIEAGFPIASVGDFEAVAEIAKNAKNAVIAGLARAIPGDIARAGEAVRHARRGRIHTFVSTSPIHLAHQMRKSEAEVLEIITATVTQARNLVEDVEWSAMDATRTPIDYLCKCVETAIAAGATTVNLPDTVGYAVPDEYRRMFRTIRERVPNADKAIFSVHCHDDLGLAVANSLAGVEGGARQVESTINGIGERAGNAALEEVVMAIKTRGDVMPYWCNVESTMLTRASKLVSAATSFPVQYNKAIVGRNAFAHESGIHQDGMLKNAQTYEIMTPESVGVKQTSLVMGKHSGRHAFQHKLEELGYKLAENQLQDAFVRFKALADRKKDIYDEDIVALVDEEMAASHDRIKLTSLTVIAGTHGPQRATMKLTVDGQTRIEEAEGNGPVDAVFNCIKRLVPHEAKLDLYQVHAVTHGTDAQAEVSVRLSQDGRAMTSKAADPDTLVASAKAYLGALNKIVMKHQRDVPSAAAAS.

Positions 12 to 274 constitute a Pyruvate carboxyltransferase domain; sequence VVIFDTTLRD…WCNVESTMLT (263 aa). Mn(2+) is bound by residues aspartate 21, histidine 209, histidine 211, and asparagine 245. The regulatory domain stretch occupies residues 398–520; it reads KLTSLTVIAG…RDVPSAAAAS (123 aa).

It belongs to the alpha-IPM synthase/homocitrate synthase family. LeuA type 1 subfamily. Homodimer. The cofactor is Mn(2+).

It is found in the cytoplasm. It catalyses the reaction 3-methyl-2-oxobutanoate + acetyl-CoA + H2O = (2S)-2-isopropylmalate + CoA + H(+). Its pathway is amino-acid biosynthesis; L-leucine biosynthesis; L-leucine from 3-methyl-2-oxobutanoate: step 1/4. Functionally, catalyzes the condensation of the acetyl group of acetyl-CoA with 3-methyl-2-oxobutanoate (2-ketoisovalerate) to form 3-carboxy-3-hydroxy-4-methylpentanoate (2-isopropylmalate). In Nitrobacter hamburgensis (strain DSM 10229 / NCIMB 13809 / X14), this protein is 2-isopropylmalate synthase.